Consider the following 146-residue polypeptide: Catabolic 3-dehydroquinase (146 aa).

Tyr24 functions as the Proton acceptor in the catalytic mechanism. Residues Asn78, His84, and Asp91 each contribute to the substrate site. The Proton donor role is filled by His104. Residues 105–106 (IT) and Arg115 each bind substrate.

This sequence belongs to the type-II 3-dehydroquinase family. In terms of assembly, homododecamer. Adopts a ring-like structure, composed of an arrangement of two hexameric rings stacked on top of one another.

It catalyses the reaction 3-dehydroquinate = 3-dehydroshikimate + H2O. It functions in the pathway aromatic compound metabolism; 3,4-dihydroxybenzoate biosynthesis; 3,4-dihydroxybenzoate from 3-dehydroquinate: step 1/2. In terms of biological role, is involved in the catabolism of quinate. Allows the utilization of quinate as carbon source via the beta-ketoadipate pathway. The polypeptide is Catabolic 3-dehydroquinase (Meyerozyma guilliermondii (strain ATCC 6260 / CBS 566 / DSM 6381 / JCM 1539 / NBRC 10279 / NRRL Y-324) (Yeast)).